Here is a 709-residue protein sequence, read N- to C-terminus: Elongation factor G (709 aa).

In terms of domain architecture, tr-type G spans 9 to 296 (AKVRNIGIMA…AVVRYLPSPL (288 aa)). Residues 18 to 25 (AHIDAGKT), 86 to 90 (DTPGH), and 140 to 143 (NKLD) contribute to the GTP site.

The protein belongs to the TRAFAC class translation factor GTPase superfamily. Classic translation factor GTPase family. EF-G/EF-2 subfamily.

It localises to the cytoplasm. Functionally, catalyzes the GTP-dependent ribosomal translocation step during translation elongation. During this step, the ribosome changes from the pre-translocational (PRE) to the post-translocational (POST) state as the newly formed A-site-bound peptidyl-tRNA and P-site-bound deacylated tRNA move to the P and E sites, respectively. Catalyzes the coordinated movement of the two tRNA molecules, the mRNA and conformational changes in the ribosome. This is Elongation factor G from Streptomyces griseus subsp. griseus (strain JCM 4626 / CBS 651.72 / NBRC 13350 / KCC S-0626 / ISP 5235).